Reading from the N-terminus, the 494-residue chain is Glycerol kinase (494 aa).

An ADP-binding site is contributed by Thr12. Thr12, Thr13, and Ser14 together coordinate ATP. Residue Thr12 participates in sn-glycerol 3-phosphate binding. Arg16 serves as a coordination point for ADP. Sn-glycerol 3-phosphate-binding residues include Arg82, Glu83, Tyr134, and Asp241. Residues Arg82, Glu83, Tyr134, Asp241, and Gln242 each contribute to the glycerol site. ADP contacts are provided by Thr263 and Gly306. 4 residues coordinate ATP: Thr263, Gly306, Gln310, and Gly407. Gly407 lines the ADP pocket.

Belongs to the FGGY kinase family.

It catalyses the reaction glycerol + ATP = sn-glycerol 3-phosphate + ADP + H(+). It participates in polyol metabolism; glycerol degradation via glycerol kinase pathway; sn-glycerol 3-phosphate from glycerol: step 1/1. With respect to regulation, inhibited by fructose 1,6-bisphosphate (FBP). Its function is as follows. Key enzyme in the regulation of glycerol uptake and metabolism. Catalyzes the phosphorylation of glycerol to yield sn-glycerol 3-phosphate. This chain is Glycerol kinase, found in Brachyspira hyodysenteriae (strain ATCC 49526 / WA1).